A 200-amino-acid polypeptide reads, in one-letter code: High mobility group protein B3 (200 aa).

Lys3 carries the post-translational modification N6-acetyllysine. 2 consecutive DNA-binding regions (HMG box) follow at residues Pro9 to Gly79 and Pro93 to Lys161. At Cys23 the chain carries Cysteine sulfonic acid (-SO3H); alternate. The cysteines at positions 23 and 45 are disulfide-linked. N6-acetyllysine occurs at positions 30 and 43. Cys45 is subject to Cysteine sulfonic acid (-SO3H); alternate. The interval Tyr71–Pro97 is disordered. Ser98 is modified (phosphoserine). Residue Cys104 is modified to Cysteine sulfonic acid (-SO3H). N6-acetyllysine occurs at positions 112 and 139. The interval Lys163–Glu200 is disordered. Over residues Glu182–Glu200 the composition is skewed to acidic residues.

This sequence belongs to the HMGB family. Reduction/oxidation of cysteine residues Cys-23, Cys-45 and Cys-104 and a possible intramolecular disulfide bond involving Cys-23 and Cys-45 give rise to different redox forms with specific functional activities in various cellular compartments: 1- fully reduced HMGB3 (HMGB3C23hC45hC104h), 2- disulfide HMGB3 (HMGB3C23-C45C104h) and 3- sulfonyl HMGB3 (HMGB3C23soC45soC104so).

It is found in the nucleus. The protein resides in the chromosome. The protein localises to the cytoplasm. Functionally, multifunctional protein with various roles in different cellular compartments. May act in a redox sensitive manner. Associates with chromatin and binds DNA with a preference for non-canonical DNA structures such as single-stranded DNA. Can bend DNA and enhance DNA flexibility by looping thus providing a mechanism to promote activities on various gene promoters. Proposed to be involved in the innate immune response to nucleic acids by acting as a cytoplasmic promiscuous immunogenic DNA/RNA sensor. Negatively regulates B-cell and myeloid cell differentiation. In hematopoietic stem cells may regulate the balance between self-renewal and differentiation. Involved in negative regulation of canonical Wnt signaling. This Bos taurus (Bovine) protein is High mobility group protein B3 (HMGB3).